The following is a 601-amino-acid chain: MAEQKRDYYEVLGITPDADQSEIKKAFRKLAKKYHPDRNNAPDAAKIFAEINEANDVLSNPKKRANYDKYGFDGVDGEPAFNFQADVFQSFFEEIAKSGVFNNQTNPEQKEKKKRYHWFSKKPKQEQPEINLDHVVEQTIKKVQQNQNQNKDPDELRSKVPGEVTASDWEALVGDTRYGYFDETGDWSWKGYFDEQGKWVWNEPVDSETSEVSVEPEPTPVAPEASFEEAQPEINAEPEASFESTPTPEPVAPEASFEEAQPEPTPIPEPIPTPVQVQPLLLDLNLFTIPTKATKDDLLFDNINLTTYEQVVDYLNSQATPNLAKTDGELQTIDGTNPLLLEQCKKIKKQAEQLFKKLFLKKQLPFITQPEVVEESKTSFDENNVNLVYFEKVPEILFINQQPKEVKYTRQVFDGLTNKTTSETITLEIQLLQTPKETVSAIFKGFGNDHGKGCGDLKIVFEKIKSPFFQVNEDGLHSACIIDPLVAYNGGIIDVFGPYTNFQVKVDGEIDINAIMKFEKLGIAKTKRKGDLFVHLYYSSVPKKKLTTNPQVQQFLELLQAEYELLQDNIKSLKYFKNNLVIPKKPLDQQSYQYLSQEPIS.

The J domain maps to K5–G77. Disordered stretches follow at residues V143–E163 and V205–P272. Positions K151–V160 are enriched in basic and acidic residues. A compositionally biased stretch (pro residues) spans E263–P272.

The sequence is that of DnaJ-like protein MG200 from Mycoplasma genitalium (strain ATCC 33530 / DSM 19775 / NCTC 10195 / G37) (Mycoplasmoides genitalium).